The following is an 894-amino-acid chain: Genome polyprotein 2 (894 aa).

Positions 109-229 constitute a Peptidase C6 domain; the sequence is TAEFKSGFCY…GCEYMLYPVG (121 aa). Residues Cys-117 and His-189 each act as for helper component proteinase activity in the active site. The tract at residues 502–539 is disordered; it reads WVSLDSGDEDDDHSGGGGGSPQTPGGQPPASPAPGTHQ.

Belongs to the bymoviruses polyprotein 2 family. The viral RNA2 of bymoviruses is expressed as a single polyprotein which undergoes post-translational proteolytic processing resulting in the production of at least two individual proteins. The HC-pro cleaves its C-terminus autocatalytically (Potential).

It catalyses the reaction Hydrolyzes a Gly-|-Gly bond at its own C-terminus, commonly in the sequence -Tyr-Xaa-Val-Gly-|-Gly, in the processing of the potyviral polyprotein.. The polypeptide is Genome polyprotein 2 (RNA2) (Hordeum vulgare (Barley)).